A 373-amino-acid chain; its full sequence is C-C chemokine receptor type 2 (373 aa).

The Extracellular segment spans residues 1–55; that stretch reads MEDNNMLPQFIHGILSTSHSLFTRSIQELDEGATTPYDYDDGEPCHKTSVKQIGA. Residues 56–83 traverse the membrane as a helical segment; it reads WILPPLYSLVFIFGFVGNMLVIIILIGC. The Cytoplasmic segment spans residues 84-93; it reads KKLKSMTDIY. A helical transmembrane segment spans residues 94–114; it reads LLNLAISDLLFLLTLPFWAHY. Over 115–127 the chain is Extracellular; the sequence is AANEWVFGNIMCK. A disulfide bridge links Cys-126 with Cys-203. A helical transmembrane segment spans residues 128 to 149; it reads VFTGLYHIGYFGGIFFIILLTI. Over 150 to 166 the chain is Cytoplasmic; that stretch reads DRYLAIVHAVFALKART. Tyr-152 carries the phosphotyrosine; by JAK2 modification. A helical membrane pass occupies residues 167-191; the sequence is VTFGVITSVVTWVVAVFASLPGIIF. Residues 192–219 lie on the Extracellular side of the membrane; that stretch reads TKSKQDDHHYTCGPYFTQLWKNFQTIMR. The chain crosses the membrane as a helical span at residues 220-239; the sequence is NILSLILPLLVMVICYSGIL. The Cytoplasmic segment spans residues 240–256; that stretch reads HTLFRCRNEKKRHRAVR. Residues 257-281 form a helical membrane-spanning segment; sequence LIFAIMIVYFLFWTPYNIVLFLTTF. Residues 282–298 are Extracellular-facing; the sequence is QESLGMSNCVIDKHLDQ. The chain crosses the membrane as a helical span at residues 299–322; that stretch reads AMQVTETLGMTHCCINPVIYAFVG. The Cytoplasmic segment spans residues 323–373; that stretch reads EKFRRYLSIFFRKHIAKRLCKQCPVFYRETADRVSSTFTPSTGEQEVSVGL.

The protein belongs to the G-protein coupled receptor 1 family. In terms of assembly, interacts with ARRB1. Interacts (via extracellular N-terminal region) with beta-defensin DEFB106A/DEFB106B; this interaction may preferentially require specific tyrosine sulfation on CCR2. Interacts with NUP85; the interaction is required for CCR2 clusters formation on the cell membrane and CCR2 signaling. In terms of processing, N-glycosylated. Post-translationally, sulfation increases the affinity for both monomeric and dimeric CCL2 with stronger binding to the monomeric form. Binding of sulfated CCR2 to CCL2 promotes conversion of CCL2 from dimer to monomer. In terms of tissue distribution, epressed in mature thymocytes. Detected in monocyte/macrophage cell lines, but not in nonhematopoietic cell lines.

The protein localises to the cell membrane. Key functional receptor for CCL2 but can also bind CCL7 and CCL12 chemokines. Its binding with CCL2 on monocytes and macrophages mediates chemotaxis and migration induction through the activation of the PI3K cascade, the small G protein Rac and lamellipodium protrusion. Also acts as a receptor for the beta-defensin DEFB106A/DEFB106B. Regulates the expression of T-cell inflammatory cytokines and T-cell differentiation, promoting the differentiation of T-cells into T-helper 17 cells (Th17) during inflammation. Facilitates the export of mature thymocytes by enhancing directional movement of thymocytes to sphingosine-1-phosphate stimulation and up-regulation of S1P1R expression; signals through the JAK-STAT pathway to regulate FOXO1 activity leading to an increased expression of S1P1R. Plays an important role in mediating peripheral nerve injury-induced neuropathic pain. Increases NMDA-mediated synaptic transmission in both dopamine D1 and D2 receptor-containing neurons, which may be caused by MAPK/ERK-dependent phosphorylation of GRIN2B/NMDAR2B. Mediates the recruitment of macrophages and monocytes to the injury site following brain injury. In Mus musculus (Mouse), this protein is C-C chemokine receptor type 2 (Ccr2).